Here is a 98-residue protein sequence, read N- to C-terminus: Co-chaperonin GroES 1 (98 aa).

Belongs to the GroES chaperonin family. In terms of assembly, heptamer of 7 subunits arranged in a ring. Interacts with the chaperonin GroEL.

The protein resides in the cytoplasm. Together with the chaperonin GroEL, plays an essential role in assisting protein folding. The GroEL-GroES system forms a nano-cage that allows encapsulation of the non-native substrate proteins and provides a physical environment optimized to promote and accelerate protein folding. GroES binds to the apical surface of the GroEL ring, thereby capping the opening of the GroEL channel. The chain is Co-chaperonin GroES 1 from Rhizobium meliloti (strain 1021) (Ensifer meliloti).